The chain runs to 796 residues: High affinity nerve growth factor receptor (796 aa).

Residues 1–32 form the signal peptide; it reads MLRGGRRGQLGWHSWAAGPGSLLAWLILASAG. The Extracellular portion of the chain corresponds to 33–423; that stretch reads AAPCPDACCP…TPFGVSVAVG (391 aa). Intrachain disulfides connect cysteine 36/cysteine 41 and cysteine 40/cysteine 50. N-linked (GlcNAc...) asparagine glycosylation is found at asparagine 67, asparagine 95, asparagine 121, asparagine 188, asparagine 202, asparagine 253, asparagine 262, asparagine 281, asparagine 318, asparagine 323, asparagine 338, asparagine 358, and asparagine 401. LRR repeat units follow at residues 90-113 and 116-137; these read LGEL…AFHF and RLSR…TVQG. Residues 148 to 193 enclose the LRRCT domain; that stretch reads NPLHCSCALRWLQRWEEEGLGGVPEQKLQCHGQGPLAHMPNASCGV. A disulfide bond links cysteine 154 and cysteine 191. 2 Ig-like C2-type domains span residues 194–283 and 299–365; these read PTLK…VNVS and WCIP…LAAN. Cysteine 215 and cysteine 265 are disulfide-bonded. An intrachain disulfide couples cysteine 300 to cysteine 345. A helical transmembrane segment spans residues 424–439; that stretch reads LAVFACLFLSTLLLVL. Over 440 to 796 the chain is Cytoplasmic; that stretch reads NKCGRRNKFG…APPVYLDVLG (357 aa). Residues 469–490 are interaction with SQSTM1; sequence MTLGGSSLSPTEGKGSGLQGHI. At tyrosine 496 the chain carries Phosphotyrosine; by autocatalysis. In terms of domain architecture, Protein kinase spans 510–781; sequence IVLKWELGEG…HSIKDVHARL (272 aa). Position 516 to 524 (516 to 524) interacts with ATP; it reads LGEGAFGKV. The short motif at 537–541 is the DXXLL element; the sequence is DKMLV. An ATP-binding site is contributed by lysine 544. The short motif at 607 to 611 is the DXXLL element; the sequence is DAKLL. Aspartate 650 serves as the catalytic Proton acceptor. A phosphotyrosine; by autocatalysis mark is found at tyrosine 676, tyrosine 680, tyrosine 681, and tyrosine 791.

The protein belongs to the protein kinase superfamily. Tyr protein kinase family. Insulin receptor subfamily. As to quaternary structure, exists in a dynamic equilibrium between monomeric (low affinity) and dimeric (high affinity) structures. Homodimerization is induced by binding of a NGF dimer. Interacts with SQSTM1; bridges NTRK1 to NGFR. Forms a ternary complex with NGFR and KIDINS220; this complex is affected by the expression levels of KIDINS220 and an increase in KIDINS220 expression leads to a decreased association of NGFR and NTRK1. Interacts with SH2D1A; regulates NTRK1. Interacts (phosphorylated upon activation by NGF) with SHC1; mediates SHC1 phosphorylation and activation. Interacts (phosphorylated upon activation by NGF) with PLCG1; mediates PLCG1 phosphorylation and activation. Interacts (phosphorylated) with SH2B1 and SH2B2. Interacts with GRB2. Interacts with PIK3R1. Interacts with FRS2. Interacts with SORT1; may regulate NTRK1 anterograde axonal transport. Interacts with RAB7A. Found in a complex, at least composed of KIDINS220, MAGI2, NTRK1 and RAPGEF2; the complex is mainly formed at late endosomes in a nerve growth factor (NGF)-dependent manner. Interacts with RAPGEF2; the interaction is strengthened after NGF stimulation. Interacts with PTPRS. Interacts with USP36; USP36 does not deubiquitinate NTRK1. Interacts with GGA3. Interacts with TSPAN1; this interaction promotes NTRK1 stability. In terms of processing, ligand-mediated autophosphorylation. Interaction with SQSTM1 is phosphotyrosine-dependent. Autophosphorylation at Tyr-496 mediates interaction and phosphorylation of SHC1. Post-translationally, N-glycosylated. Isoform TrkA-I and isoform TrkA-II are N-glycosylated. Ubiquitinated. Undergoes polyubiquitination upon activation; regulated by NGFR. Ubiquitination by NEDD4L leads to degradation. Ubiquitination regulates the internalization of the receptor. Isoform TrkA-I is found in most non-neuronal tissues. Isoform TrkA-II is primarily expressed in neuronal cells. TrkA-III is specifically expressed by pluripotent neural stem and neural crest progenitors.

Its subcellular location is the cell membrane. The protein localises to the early endosome membrane. The protein resides in the late endosome membrane. It is found in the recycling endosome membrane. It carries out the reaction L-tyrosyl-[protein] + ATP = O-phospho-L-tyrosyl-[protein] + ADP + H(+). The pro-survival signaling effect of NTRK1 in neurons requires its endocytosis into signaling early endosomes and its retrograde axonal transport. This is regulated by different proteins including CFL1, RAC1 and SORT1. NTF3 is unable to induce this signaling probably due to the lability of the NTF3-NTRK1 complex in endosomes. SH2D1A inhibits the autophosphorylation of the receptor, and alters the recruitment and activation of downstream effectors and signaling cascades. Regulated by NGFR. Receptor tyrosine kinase involved in the development and the maturation of the central and peripheral nervous systems through regulation of proliferation, differentiation and survival of sympathetic and nervous neurons. High affinity receptor for NGF which is its primary ligand. Can also bind and be activated by NTF3/neurotrophin-3. However, NTF3 only supports axonal extension through NTRK1 but has no effect on neuron survival. Upon dimeric NGF ligand-binding, undergoes homodimerization, autophosphorylation and activation. Recruits, phosphorylates and/or activates several downstream effectors including SHC1, FRS2, SH2B1, SH2B2 and PLCG1 that regulate distinct overlapping signaling cascades driving cell survival and differentiation. Through SHC1 and FRS2 activates a GRB2-Ras-MAPK cascade that regulates cell differentiation and survival. Through PLCG1 controls NF-Kappa-B activation and the transcription of genes involved in cell survival. Through SHC1 and SH2B1 controls a Ras-PI3 kinase-AKT1 signaling cascade that is also regulating survival. In absence of ligand and activation, may promote cell death, making the survival of neurons dependent on trophic factors. Functionally, resistant to NGF, it constitutively activates AKT1 and NF-kappa-B and is unable to activate the Ras-MAPK signaling cascade. Antagonizes the anti-proliferative NGF-NTRK1 signaling that promotes neuronal precursors differentiation. Isoform TrkA-III promotes angiogenesis and has oncogenic activity when overexpressed. The chain is High affinity nerve growth factor receptor (NTRK1) from Homo sapiens (Human).